An 872-amino-acid chain; its full sequence is Leucine--tRNA ligase (872 aa).

The 'HIGH' region signature appears at 42–52 (PYPSGSLHMGH). The 'KMSKS' region motif lies at 634–638 (TMSKS). K637 contacts ATP.

The protein belongs to the class-I aminoacyl-tRNA synthetase family.

Its subcellular location is the cytoplasm. The catalysed reaction is tRNA(Leu) + L-leucine + ATP = L-leucyl-tRNA(Leu) + AMP + diphosphate. The protein is Leucine--tRNA ligase of Trichormus variabilis (strain ATCC 29413 / PCC 7937) (Anabaena variabilis).